A 194-amino-acid polypeptide reads, in one-letter code: 5'-deoxynucleotidase VP0926 (194 aa).

Residues 18-19 and His-33 each bind substrate; that span reads RW. The HD domain maps to 30–142; it reads VSEHSLQVAF…VKQADSICAY (113 aa). The a divalent metal cation site is built by His-33, His-68, and Asp-69. Substrate is bound by residues Asp-69, 77–80, and Asp-137; that span reads DLPT. An a divalent metal cation-binding site is contributed by Asp-137.

This sequence belongs to the 5DNU family. In terms of assembly, homodimer. The cofactor is a divalent metal cation.

It is found in the cytoplasm. It carries out the reaction a 2'-deoxyribonucleoside 5'-phosphate + H2O = a 2'-deoxyribonucleoside + phosphate. Functionally, catalyzes the strictly specific dephosphorylation of 2'-deoxyribonucleoside 5'-monophosphates. This chain is 5'-deoxynucleotidase VP0926, found in Vibrio parahaemolyticus serotype O3:K6 (strain RIMD 2210633).